Reading from the N-terminus, the 255-residue chain is Urease accessory protein UreD 1 (255 aa).

Belongs to the UreD family. In terms of assembly, ureD, UreF and UreG form a complex that acts as a GTP-hydrolysis-dependent molecular chaperone, activating the urease apoprotein by helping to assemble the nickel containing metallocenter of UreC. The UreE protein probably delivers the nickel.

The protein resides in the cytoplasm. Required for maturation of urease via the functional incorporation of the urease nickel metallocenter. This Saccharopolyspora erythraea (strain ATCC 11635 / DSM 40517 / JCM 4748 / NBRC 13426 / NCIMB 8594 / NRRL 2338) protein is Urease accessory protein UreD 1.